Here is a 106-residue protein sequence, read N- to C-terminus: MHGPRETLQEIVLHLEPQNELDPVDLLCYEQLSESEEENDEADGVSHAQLPARRAEPQRHKILCVCCKCDGRIELTVESSAEDLRTLQQLFLSTLSFVCPWCATNQ.

The segment at 1–50 (MHGPRETLQEIVLHLEPQNELDPVDLLCYEQLSESEEENDEADGVSHAQL) is E7 terminal domain. The LXCXE motif; interaction with host RB1 and TMEM173/STING signature appears at 26 to 30 (LLCYE). Residues 33-43 (SESEEENDEAD) are compositionally biased toward acidic residues. Residues 33–55 (SESEEENDEADGVSHAQLPARRA) are disordered. The segment at 66–102 (CCKCDGRIELTVESSAEDLRTLQQLFLSTLSFVCPWC) is a zinc-finger region. The Nuclear export signal signature appears at 84-92 (LRTLQQLFL).

The protein belongs to the papillomaviridae E7 protein family. In terms of assembly, homodimer. Homooligomer. Interacts with host RB1; this interaction induces dissociation of RB1-E2F1 complex thereby disrupting RB1 activity. Interacts with host EP300; this interaction represses EP300 transcriptional activity. Interacts with protein E2; this interaction inhibits E7 oncogenic activity. Interacts with host TMEM173/STING; this interaction impairs the ability of TMEM173/STING to sense cytosolic DNA and promote the production of type I interferon (IFN-alpha and IFN-beta). Highly phosphorylated.

It is found in the host cytoplasm. It localises to the host nucleus. Functionally, plays a role in viral genome replication by driving entry of quiescent cells into the cell cycle. Stimulation of progression from G1 to S phase allows the virus to efficiently use the cellular DNA replicating machinery to achieve viral genome replication. E7 protein has both transforming and trans-activating activities. Induces the disassembly of the E2F1 transcription factor from RB1, with subsequent transcriptional activation of E2F1-regulated S-phase genes. Interferes with host histone deacetylation mediated by HDAC1 and HDAC2, leading to transcription activation. Also plays a role in the inhibition of both antiviral and antiproliferative functions of host interferon alpha. Interaction with host TMEM173/STING impairs the ability of TMEM173/STING to sense cytosolic DNA and promote the production of type I interferon (IFN-alpha and IFN-beta). The chain is Protein E7 from Human papillomavirus 45.